Here is a 67-residue protein sequence, read N- to C-terminus: Small ribosomal subunit protein eS31 (67 aa).

Zn(2+) is bound by residues Cys31, Cys34, Cys49, and Cys52. The segment at 31-52 adopts a C4-type zinc-finger fold; that stretch reads CPKCGAGVFMAEHLNRFACGKC.

This sequence belongs to the eukaryotic ribosomal protein eS31 family. Part of the 30S ribosomal subunit. Zn(2+) is required as a cofactor.

The sequence is that of Small ribosomal subunit protein eS31 from Methanococcus maripaludis (strain C6 / ATCC BAA-1332).